The sequence spans 311 residues: Dihydroorotate dehydrogenase A (fumarate) (311 aa).

FMN-binding positions include Ser-19 and 43 to 44 (KS). Substrate-binding positions include Lys-43, 67 to 71 (NSMGL), and Asn-127. Residue Asn-127 participates in FMN binding. Cys-130 serves as the catalytic Nucleophile. FMN-binding residues include Lys-164 and Val-192. 193–194 (NS) is a substrate binding site. FMN-binding positions include Gly-221, 249–250 (GG), and 271–272 (GT).

It belongs to the dihydroorotate dehydrogenase family. Type 1 subfamily. As to quaternary structure, homodimer. Requires FMN as cofactor.

The protein resides in the cytoplasm. The enzyme catalyses (S)-dihydroorotate + fumarate = orotate + succinate. It participates in pyrimidine metabolism; UMP biosynthesis via de novo pathway. Catalyzes the conversion of dihydroorotate to orotate with fumarate as the electron acceptor. The sequence is that of Dihydroorotate dehydrogenase A (fumarate) (pyrDA) from Lactococcus lactis subsp. cremoris (Streptococcus cremoris).